Consider the following 150-residue polypeptide: D-aminoacyl-tRNA deacylase (150 aa).

Residues 136 to 137 (GP) carry the Gly-cisPro motif, important for rejection of L-amino acids motif.

This sequence belongs to the DTD family. In terms of assembly, homodimer.

Its subcellular location is the cytoplasm. The enzyme catalyses glycyl-tRNA(Ala) + H2O = tRNA(Ala) + glycine + H(+). It catalyses the reaction a D-aminoacyl-tRNA + H2O = a tRNA + a D-alpha-amino acid + H(+). In terms of biological role, an aminoacyl-tRNA editing enzyme that deacylates mischarged D-aminoacyl-tRNAs. Also deacylates mischarged glycyl-tRNA(Ala), protecting cells against glycine mischarging by AlaRS. Acts via tRNA-based rather than protein-based catalysis; rejects L-amino acids rather than detecting D-amino acids in the active site. By recycling D-aminoacyl-tRNA to D-amino acids and free tRNA molecules, this enzyme counteracts the toxicity associated with the formation of D-aminoacyl-tRNA entities in vivo and helps enforce protein L-homochirality. The polypeptide is D-aminoacyl-tRNA deacylase (Staphylococcus aureus (strain bovine RF122 / ET3-1)).